The following is a 439-amino-acid chain: Glutamyl-tRNA reductase (439 aa).

Substrate is bound by residues 48–51 (TCNR), Ser107, 112–114 (EPQ), and Gln118. The active-site Nucleophile is Cys49. NADP(+) is bound at residue 187–192 (GAGEMA).

Belongs to the glutamyl-tRNA reductase family. In terms of assembly, homodimer.

It carries out the reaction (S)-4-amino-5-oxopentanoate + tRNA(Glu) + NADP(+) = L-glutamyl-tRNA(Glu) + NADPH + H(+). It participates in porphyrin-containing compound metabolism; protoporphyrin-IX biosynthesis; 5-aminolevulinate from L-glutamyl-tRNA(Glu): step 1/2. Functionally, catalyzes the NADPH-dependent reduction of glutamyl-tRNA(Glu) to glutamate 1-semialdehyde (GSA). The sequence is that of Glutamyl-tRNA reductase from Maridesulfovibrio salexigens (strain ATCC 14822 / DSM 2638 / NCIMB 8403 / VKM B-1763) (Desulfovibrio salexigens).